Here is a 310-residue protein sequence, read N- to C-terminus: Ribosomal RNA small subunit methyltransferase H (310 aa).

S-adenosyl-L-methionine contacts are provided by residues 32-34 (GGH), Asp-52, Phe-79, Asp-100, and Gln-107.

The protein belongs to the methyltransferase superfamily. RsmH family.

It is found in the cytoplasm. It carries out the reaction cytidine(1402) in 16S rRNA + S-adenosyl-L-methionine = N(4)-methylcytidine(1402) in 16S rRNA + S-adenosyl-L-homocysteine + H(+). In terms of biological role, specifically methylates the N4 position of cytidine in position 1402 (C1402) of 16S rRNA. The polypeptide is Ribosomal RNA small subunit methyltransferase H (Bacillus cereus (strain B4264)).